A 379-amino-acid chain; its full sequence is UDP-N-acetylglucosamine--N-acetylmuramyl-(pentapeptide) pyrophosphoryl-undecaprenol N-acetylglucosamine transferase (379 aa).

UDP-N-acetyl-alpha-D-glucosamine-binding positions include T19–G21, N133, R174, S207, I261, and Q306.

The protein belongs to the glycosyltransferase 28 family. MurG subfamily.

The protein resides in the cell inner membrane. The enzyme catalyses di-trans,octa-cis-undecaprenyl diphospho-N-acetyl-alpha-D-muramoyl-L-alanyl-D-glutamyl-meso-2,6-diaminopimeloyl-D-alanyl-D-alanine + UDP-N-acetyl-alpha-D-glucosamine = di-trans,octa-cis-undecaprenyl diphospho-[N-acetyl-alpha-D-glucosaminyl-(1-&gt;4)]-N-acetyl-alpha-D-muramoyl-L-alanyl-D-glutamyl-meso-2,6-diaminopimeloyl-D-alanyl-D-alanine + UDP + H(+). Its pathway is cell wall biogenesis; peptidoglycan biosynthesis. Cell wall formation. Catalyzes the transfer of a GlcNAc subunit on undecaprenyl-pyrophosphoryl-MurNAc-pentapeptide (lipid intermediate I) to form undecaprenyl-pyrophosphoryl-MurNAc-(pentapeptide)GlcNAc (lipid intermediate II). The protein is UDP-N-acetylglucosamine--N-acetylmuramyl-(pentapeptide) pyrophosphoryl-undecaprenol N-acetylglucosamine transferase of Porphyromonas gingivalis (strain ATCC BAA-308 / W83).